The following is a 357-amino-acid chain: uncharacterized protein (357 aa).

This is an uncharacterized protein from Mycobacterium bovis (strain ATCC BAA-935 / AF2122/97).